Consider the following 510-residue polypeptide: Gallate 1-beta-glucosyltransferase (510 aa).

H19 functions as the Proton acceptor in the catalytic mechanism. H19 is an an anthocyanidin binding site. The UDP-alpha-D-glucose site is built by Q343, H358, W361, N362, S363, and E366. G381 is a binding site for an anthocyanidin. D382 and Q383 together coordinate UDP-alpha-D-glucose.

It belongs to the UDP-glycosyltransferase family. In terms of tissue distribution, expressed in swelling buds and young leaves.

The catalysed reaction is 3,4,5-trihydroxybenzoate + UDP-alpha-D-glucose = 1-O-galloyl-beta-D-glucose + UDP. It catalyses the reaction vanillate + UDP-alpha-D-glucose = 1-O-(4-hydroxy-3-methoxybenzoyl)-beta-D-glucose + UDP. It carries out the reaction 3,4-dihydroxybenzoate + UDP-alpha-D-glucose = 1-O-(3,4-dihydroxy-benzoyl)-beta-D-glucose + UDP. Functionally, glucosyltransferase that catalyzes the formation of 1-O-beta-D-glucose esters with hydroxybenzoic acids as preferred glucosyl acceptors. Has the highest activity with 3,4-dihydroxybenzoate, vanillate and gallate in vitro. Gallate is the predicted native substrate of the enzyme, which thus catalyzes the formation of 1-O-galloyl-beta-D-glucose, the first committed step of gallotannin biosynthesis. This chain is Gallate 1-beta-glucosyltransferase, found in Quercus robur (English oak).